Consider the following 314-residue polypeptide: Acetyl-coenzyme A carboxylase carboxyl transferase subunit alpha (314 aa).

Residues 32–289 (EIDMLEASLE…KSAFVAQLDS (258 aa)) form the CoA carboxyltransferase C-terminal domain.

It belongs to the AccA family. Acetyl-CoA carboxylase is a heterohexamer composed of biotin carboxyl carrier protein (AccB), biotin carboxylase (AccC) and two subunits each of ACCase subunit alpha (AccA) and ACCase subunit beta (AccD).

It is found in the cytoplasm. It carries out the reaction N(6)-carboxybiotinyl-L-lysyl-[protein] + acetyl-CoA = N(6)-biotinyl-L-lysyl-[protein] + malonyl-CoA. Its pathway is lipid metabolism; malonyl-CoA biosynthesis; malonyl-CoA from acetyl-CoA: step 1/1. In terms of biological role, component of the acetyl coenzyme A carboxylase (ACC) complex. First, biotin carboxylase catalyzes the carboxylation of biotin on its carrier protein (BCCP) and then the CO(2) group is transferred by the carboxyltransferase to acetyl-CoA to form malonyl-CoA. In Staphylococcus aureus (strain JH9), this protein is Acetyl-coenzyme A carboxylase carboxyl transferase subunit alpha.